A 72-amino-acid chain; its full sequence is uncharacterized protein (72 aa).

This is an uncharacterized protein from Homo sapiens (Human).